We begin with the raw amino-acid sequence, 363 residues long: Mitochondrial RNA-splicing protein MRS1 (363 aa).

In terms of assembly, homodimer. Forms a ribonucleoprotein complex composed of maturase bI3 and 2 dimers of MRS1 that assemble around the bI3 RNA.

It localises to the mitochondrion matrix. In terms of biological role, function in mitochondrial RNA splicing in the excision of mitochondrial group I introns aI5 beta from COX1 and bI3 from COB transcripts and thus would be involved in obtaining the correct structure of the intron, to allow the RNA catalyzed reactions to occur. The sequence is that of Mitochondrial RNA-splicing protein MRS1 (MRS1) from Saccharomyces cerevisiae (strain ATCC 204508 / S288c) (Baker's yeast).